Here is a 352-residue protein sequence, read N- to C-terminus: Molybdenum import ATP-binding protein ModC (352 aa).

One can recognise an ABC transporter domain in the interval 1-229 (MLELNFSQTL…SVMNPWLPKE (229 aa)). 31 to 38 (GVSGAGKT) contributes to the ATP binding site. The Mop domain maps to 289-352 (QTSIRNVLRA…AQIKSVSITA (64 aa)).

Belongs to the ABC transporter superfamily. Molybdate importer (TC 3.A.1.8) family. As to quaternary structure, the complex is composed of two ATP-binding proteins (ModC), two transmembrane proteins (ModB) and a solute-binding protein (ModA).

The protein localises to the cell inner membrane. The catalysed reaction is molybdate(out) + ATP + H2O = molybdate(in) + ADP + phosphate + H(+). In terms of biological role, part of the ABC transporter complex ModABC involved in molybdenum import. Responsible for energy coupling to the transport system. The polypeptide is Molybdenum import ATP-binding protein ModC (Shigella dysenteriae serotype 1 (strain Sd197)).